Consider the following 705-residue polypeptide: Translation initiation factor IF-2 (705 aa).

The disordered stretch occupies residues 40 to 124 (DDQIKALDKK…QPAAPKEIPS (85 aa)). Basic and acidic residues predominate over residues 41–58 (DQIKALDKKFKKEQKNDN). Residues 59–77 (KQSTQNNHQKSNNQNQNKG) show a composition bias toward low complexity. Residues 94–108 (KGNKKNNRNNKKNNK) show a composition bias toward basic residues. The tr-type G domain occupies 207–376 (ERPAVVTIMG…GLVAEVQELK (170 aa)). A G1 region spans residues 216–223 (GHVDHGKT). 216-223 (GHVDHGKT) is a GTP binding site. Positions 241-245 (GITQH) are G2. A G3 region spans residues 262-265 (DTPG). Residues 262–266 (DTPGH) and 316–319 (NKID) each bind GTP. Residues 316–319 (NKID) are G4. The tract at residues 352 to 354 (SAL) is G5.

This sequence belongs to the TRAFAC class translation factor GTPase superfamily. Classic translation factor GTPase family. IF-2 subfamily.

The protein resides in the cytoplasm. Its function is as follows. One of the essential components for the initiation of protein synthesis. Protects formylmethionyl-tRNA from spontaneous hydrolysis and promotes its binding to the 30S ribosomal subunits. Also involved in the hydrolysis of GTP during the formation of the 70S ribosomal complex. This chain is Translation initiation factor IF-2, found in Staphylococcus aureus (strain MRSA252).